Consider the following 205-residue polypeptide: MSVKVISPFSQDGVQCFPKLFIISAPAGAGKTTLTHMLQREFPDAFEKTVSSTTRSARPGEVHGVDYLFVSEDDFKQSLDREDFLEWVFLFGTYYGTSKAEISRVLQKGKHCIAVIDVQGALALKKQMPAVTIFIQAPSQEELERRLNARDSEKDFQKKERLEHSAVEIAAASEFDYVVVNDDLITAYQVLRSIFIAEEHRMSHG.

In terms of domain architecture, Guanylate kinase-like spans 18-196; sequence PKLFIISAPA…AYQVLRSIFI (179 aa). 25–32 contributes to the ATP binding site; sequence APAGAGKT.

This sequence belongs to the guanylate kinase family.

Its subcellular location is the cytoplasm. The enzyme catalyses GMP + ATP = GDP + ADP. Its function is as follows. Essential for recycling GMP and indirectly, cGMP. The polypeptide is Guanylate kinase (gmk) (Chlamydia trachomatis serovar D (strain ATCC VR-885 / DSM 19411 / UW-3/Cx)).